The chain runs to 460 residues: Cysteine--tRNA ligase (460 aa).

Zn(2+) is bound at residue cysteine 29. The short motif at 31–41 (MTVYDYMHIGH) is the 'HIGH' region element. Zn(2+) contacts are provided by cysteine 210, histidine 235, and glutamate 239. A 'KMSKS' region motif is present at residues 267 to 271 (KMSKS). Residue lysine 270 coordinates ATP.

This sequence belongs to the class-I aminoacyl-tRNA synthetase family. As to quaternary structure, monomer. It depends on Zn(2+) as a cofactor.

The protein resides in the cytoplasm. It catalyses the reaction tRNA(Cys) + L-cysteine + ATP = L-cysteinyl-tRNA(Cys) + AMP + diphosphate. The sequence is that of Cysteine--tRNA ligase from Coxiella burnetii (strain RSA 493 / Nine Mile phase I).